Consider the following 714-residue polypeptide: WD repeat and coiled-coil-containing protein (714 aa).

2 WD repeats span residues 55–98 (GQFE…LEQN) and 154–194 (KGSG…LVPC). Disordered stretches follow at residues 432–454 (EESTTKSESPSQHHGIRRHSENF) and 531–564 (QASRDSSRPCSPRYETSEKLYSDATPPKNSKEKN). Residues 567–595 (QLTQNMERIFTRFAEVQQCLSEIREFTQN) adopt a coiled-coil conformation. Residues 685 to 714 (RSARRKSPARPPSGADDFPPESPKSPSMEK) form a disordered region.

The sequence is that of WD repeat and coiled-coil-containing protein (wdcp) from Danio rerio (Zebrafish).